Consider the following 224-residue polypeptide: UPF0758 protein PM1152 (224 aa).

One can recognise an MPN domain in the interval Ala-102–Leu-224. 3 residues coordinate Zn(2+): His-173, His-175, and Asp-186. The short motif at His-173 to Asp-186 is the JAMM motif element.

Belongs to the UPF0758 family.

In Pasteurella multocida (strain Pm70), this protein is UPF0758 protein PM1152.